The primary structure comprises 171 residues: Ribulose bisphosphate carboxylase small subunit, chloroplastic (171 aa).

The N-terminal 50 residues, Met-1–Arg-50, are a transit peptide targeting the chloroplast.

The protein belongs to the RuBisCO small chain family. As to quaternary structure, heterohexadecamer of 8 large and 8 small subunits.

It localises to the plastid. The protein localises to the chloroplast. Functionally, ruBisCO catalyzes two reactions: the carboxylation of D-ribulose 1,5-bisphosphate, the primary event in carbon dioxide fixation, as well as the oxidative fragmentation of the pentose substrate. Both reactions occur simultaneously and in competition at the same active site. Although the small subunit is not catalytic it is essential for maximal activity. This chain is Ribulose bisphosphate carboxylase small subunit, chloroplastic, found in Pinus thunbergii (Japanese black pine).